Here is a 67-residue protein sequence, read N- to C-terminus: DNA-directed RNA polymerase subunit omega (67 aa).

It belongs to the RNA polymerase subunit omega family. The RNAP catalytic core consists of 2 alpha, 1 beta, 1 beta' and 1 omega subunit. When a sigma factor is associated with the core the holoenzyme is formed, which can initiate transcription.

It carries out the reaction RNA(n) + a ribonucleoside 5'-triphosphate = RNA(n+1) + diphosphate. Its function is as follows. Promotes RNA polymerase assembly. Latches the N- and C-terminal regions of the beta' subunit thereby facilitating its interaction with the beta and alpha subunits. The protein is DNA-directed RNA polymerase subunit omega of Bordetella petrii (strain ATCC BAA-461 / DSM 12804 / CCUG 43448).